The sequence spans 203 residues: Urease accessory protein UreG (203 aa).

GTP is bound at residue 13 to 20 (GPVGSGKT).

Belongs to the SIMIBI class G3E GTPase family. UreG subfamily. Homodimer. UreD, UreF and UreG form a complex that acts as a GTP-hydrolysis-dependent molecular chaperone, activating the urease apoprotein by helping to assemble the nickel containing metallocenter of UreC. The UreE protein probably delivers the nickel.

It localises to the cytoplasm. Its function is as follows. Facilitates the functional incorporation of the urease nickel metallocenter. This process requires GTP hydrolysis, probably effectuated by UreG. This Methylobacillus flagellatus (strain ATCC 51484 / DSM 6875 / VKM B-1610 / KT) protein is Urease accessory protein UreG.